The primary structure comprises 258 residues: Isoprenyl transferase 1 (258 aa).

The active site involves Asp39. Residue Asp39 coordinates Mg(2+). Residues 40-43 (GNRR), Trp44, Arg52, His57, and 85-87 (SND) contribute to the substrate site. Residue Asn88 is the Proton acceptor of the active site. Residues Arg92, Arg207, and 213-215 (RLS) each bind substrate. A Mg(2+)-binding site is contributed by Glu226.

This sequence belongs to the UPP synthase family. In terms of assembly, homodimer. The cofactor is Mg(2+).

In terms of biological role, catalyzes the condensation of isopentenyl diphosphate (IPP) with allylic pyrophosphates generating different type of terpenoids. The polypeptide is Isoprenyl transferase 1 (Tropheryma whipplei (strain TW08/27) (Whipple's bacillus)).